A 278-amino-acid polypeptide reads, in one-letter code: Large ribosomal subunit protein uL2 (278 aa).

Disordered regions lie at residues 29–55 (PEKS…RHQG) and 225–278 (VMNP…NKKR). Residues 258–278 (RSNKKASNKYIVRRRTKNKKR) are compositionally biased toward basic residues.

It belongs to the universal ribosomal protein uL2 family. In terms of assembly, part of the 50S ribosomal subunit. Forms a bridge to the 30S subunit in the 70S ribosome. The N-terminus is blocked. In terms of processing, phosphorylated on serine and threonine residues.

In terms of biological role, one of the primary rRNA binding proteins. Required for association of the 30S and 50S subunits to form the 70S ribosome, for tRNA binding and peptide bond formation. It has been suggested to have peptidyltransferase activity; this is somewhat controversial. Makes several contacts with the 16S rRNA in the 70S ribosome. This chain is Large ribosomal subunit protein uL2, found in Streptomyces collinus.